We begin with the raw amino-acid sequence, 177 residues long: Transcription termination/antitermination protein NusG (177 aa).

One can recognise a KOW domain in the interval 125–150; it reads EGENVRITEGPFANFTAIVEEYDMVR.

Belongs to the NusG family.

Participates in transcription elongation, termination and antitermination. The sequence is that of Transcription termination/antitermination protein NusG from Campylobacter jejuni subsp. jejuni serotype O:2 (strain ATCC 700819 / NCTC 11168).